A 443-amino-acid polypeptide reads, in one-letter code: Adenylate cyclase (443 aa).

6 helical membrane-spanning segments follow: residues 47–69 (VLTITAWLAVVVTGSFALMQLAT), 74–93 (WYIALINVFTAVTFAIVPLL), 98–120 (GLVAPLTFIGTAYVAIFAIGWDV), 124–143 (AGAQFFFLVAAALVVLLVGI), 148–167 (LAVGLAAVAAGLVIALEFLV), and 180–202 (SVSFVLTTVSACGVAVATVWFAL). The Cytoplasmic segment spans residues 203–443 (RDTARAEAVM…RGAEPRTAGV (241 aa)). One can recognise a Guanylate cyclase domain in the interval 251–378 (SVLFADIVGF…DAVNVASRME (128 aa)). Mg(2+)-binding residues include D256 and D300.

It belongs to the adenylyl cyclase class-4/guanylyl cyclase family. As to quaternary structure, homodimer. Can also exist as monomer. It depends on Mg(2+) as a cofactor. Requires Mn(2+) as cofactor.

It is found in the cell membrane. It catalyses the reaction ATP = 3',5'-cyclic AMP + diphosphate. The chain is Adenylate cyclase (cya) from Mycobacterium bovis (strain ATCC BAA-935 / AF2122/97).